A 513-amino-acid chain; its full sequence is Leucine-rich repeat-containing protein 24 (513 aa).

The N-terminal stretch at 1-20 (MALRAPALLPLLLLLLPLRA) is a signal peptide. The LRRNT domain maps to 21–50 (AGCPAACRCYSATVECGALRLRVVPLGIPP). LRR repeat units lie at residues 51–72 (GTQT…ALAP), 75–96 (ALRR…AFRA), 99–120 (RLLE…AFVG), 123–144 (QLRV…TFLH), 147–168 (RLQE…ALAG), and 171–192 (SLAL…ALQP). Residues 204-259 (NPWRCDCALHWLGAWIKEGGQRLLTSRDRKIMCAEPPRLALQSLLDVSHSSLICIP) form the LRRCT domain. The Ig-like C2-type domain maps to 260–361 (PSVHVQPLEL…GAARVPFRLL (102 aa)). C281 and C345 are disulfide-bonded. 2 N-linked (GlcNAc...) asparagine glycosylation sites follow: N334 and N363. A disordered region spans residues 365 to 391 (SRQQPQQPAQPPPPAARPAGSEPRPEA). A helical transmembrane segment spans residues 406-426 (AIAAAIALLALTALLLVAMIC).

The protein localises to the membrane. The protein is Leucine-rich repeat-containing protein 24 (LRRC24) of Homo sapiens (Human).